Consider the following 137-residue polypeptide: Large-conductance mechanosensitive channel (137 aa).

Transmembrane regions (helical) follow at residues 10–30 (FAMR…AAFG) and 76–96 (GVFI…FMAI).

It belongs to the MscL family. In terms of assembly, homopentamer.

The protein localises to the cell inner membrane. Its function is as follows. Channel that opens in response to stretch forces in the membrane lipid bilayer. May participate in the regulation of osmotic pressure changes within the cell. The sequence is that of Large-conductance mechanosensitive channel from Escherichia coli O45:K1 (strain S88 / ExPEC).